The following is a 221-amino-acid chain: Casparian strip membrane protein 3 (221 aa).

A compositionally biased stretch (basic and acidic residues) spans 1-12 (MDIEKAASRREE). The tract at residues 1 to 28 (MDIEKAASRREEEEPIVQRPKLDKGKGK) is disordered. Residues 1–58 (MDIEKAASRREEEEPIVQRPKLDKGKGKAHVFAPPMNYNRIMDKHKQEKVSAAGWKRG) lie on the Cytoplasmic side of the membrane. A helical membrane pass occupies residues 59–79 (VAIFDFVLRLIAAITAMAAAA). At 80–109 (KMATTEETLPFFTQFLQFQAEYTDLPTMSS) the chain is on the extracellular side. Residues 110-130 (FVIVNSIVGGYLTLSLPFSIV) form a helical membrane-spanning segment. At 131–148 (CILRPLAVPPRLFLIICD) the chain is on the cytoplasmic side. The helical transmembrane segment at 149–169 (TAMMGLTMMAASASAAIVYLA) threads the bilayer. The Extracellular portion of the chain corresponds to 170-194 (HNGNSSSNWLPVCQQFGDFCQGTSG). The N-linked (GlcNAc...) asparagine glycan is linked to asparagine 173. The chain crosses the membrane as a helical span at residues 195–215 (AVVASFIAATLLMFLVILSAF). Residues 216–221 (ALKRST) lie on the Cytoplasmic side of the membrane.

This sequence belongs to the Casparian strip membrane proteins (CASP) family. Homodimer and heterodimers.

It is found in the cell membrane. Regulates membrane-cell wall junctions and localized cell wall deposition. Required for establishment of the Casparian strip membrane domain (CSD) and the subsequent formation of Casparian strips, a cell wall modification of the root endodermis that determines an apoplastic barrier between the intraorganismal apoplasm and the extraorganismal apoplasm and prevents lateral diffusion. The sequence is that of Casparian strip membrane protein 3 from Arabidopsis lyrata subsp. lyrata (Lyre-leaved rock-cress).